Consider the following 456-residue polypeptide: UDP-N-acetylmuramate--L-alanine ligase (456 aa).

Position 112-118 (112-118 (GAHGKTS)) interacts with ATP.

Belongs to the MurCDEF family.

It is found in the cytoplasm. The catalysed reaction is UDP-N-acetyl-alpha-D-muramate + L-alanine + ATP = UDP-N-acetyl-alpha-D-muramoyl-L-alanine + ADP + phosphate + H(+). Its pathway is cell wall biogenesis; peptidoglycan biosynthesis. Cell wall formation. The sequence is that of UDP-N-acetylmuramate--L-alanine ligase from Desulforapulum autotrophicum (strain ATCC 43914 / DSM 3382 / VKM B-1955 / HRM2) (Desulfobacterium autotrophicum).